We begin with the raw amino-acid sequence, 21 residues long: Putative pancreatic polypeptide 2 (21 aa).

Belongs to the NPY family.

The protein is Putative pancreatic polypeptide 2 (PPY2P) of Homo sapiens (Human).